Consider the following 386-residue polypeptide: Short-chain dehydrogenase/reductase family 42E member 1 (386 aa).

Tyr150 serves as the catalytic Proton acceptor. Residue Lys154 coordinates NAD(+). Transmembrane regions (helical) follow at residues 279–299 (FPLSLVYFFAFLTEWIHFFIS) and 363–383 (YLIWDIIFILLVTVVLLSWLP).

This sequence belongs to the 3-beta-HSD family.

It localises to the membrane. The polypeptide is Short-chain dehydrogenase/reductase family 42E member 1 (sdr42e1) (Xenopus laevis (African clawed frog)).